Consider the following 231-residue polypeptide: Large ribosomal subunit protein uL1 (231 aa).

It belongs to the universal ribosomal protein uL1 family. As to quaternary structure, part of the 50S ribosomal subunit.

In terms of biological role, binds directly to 23S rRNA. The L1 stalk is quite mobile in the ribosome, and is involved in E site tRNA release. Its function is as follows. Protein L1 is also a translational repressor protein, it controls the translation of the L11 operon by binding to its mRNA. This chain is Large ribosomal subunit protein uL1, found in Pseudomonas syringae pv. syringae (strain B728a).